A 143-amino-acid chain; its full sequence is uncharacterized protein (143 aa).

This is an uncharacterized protein from Saccharomyces cerevisiae (strain ATCC 204508 / S288c) (Baker's yeast).